Consider the following 339-residue polypeptide: Anthranilate phosphoribosyltransferase (339 aa).

Residues Gly79, 82 to 83 (GD), Ser87, 89 to 92 (NIST), 107 to 115 (KHGNRSISS), and Ser119 contribute to the 5-phospho-alpha-D-ribose 1-diphosphate site. Gly79 is an anthranilate binding site. Residue Ser91 participates in Mg(2+) binding. Asn110 lines the anthranilate pocket. Residue Arg165 coordinates anthranilate. Mg(2+) is bound by residues Asp224 and Glu225.

The protein belongs to the anthranilate phosphoribosyltransferase family. In terms of assembly, homodimer. It depends on Mg(2+) as a cofactor.

The catalysed reaction is N-(5-phospho-beta-D-ribosyl)anthranilate + diphosphate = 5-phospho-alpha-D-ribose 1-diphosphate + anthranilate. Its pathway is amino-acid biosynthesis; L-tryptophan biosynthesis; L-tryptophan from chorismate: step 2/5. Functionally, catalyzes the transfer of the phosphoribosyl group of 5-phosphorylribose-1-pyrophosphate (PRPP) to anthranilate to yield N-(5'-phosphoribosyl)-anthranilate (PRA). In Listeria monocytogenes serotype 4a (strain HCC23), this protein is Anthranilate phosphoribosyltransferase.